A 1601-amino-acid polypeptide reads, in one-letter code: Polycomb group protein Psc (1601 aa).

2 disordered regions span residues 1–91 (MMTP…TTTT) and 165–245 (NGIK…DLAT). Low complexity-rich tracts occupy residues 8 to 91 (AIQP…TTTT) and 182 to 198 (SSSS…SSSS). Over residues 199 to 215 (WPTTRRATSEDASSNGG) the composition is skewed to polar residues. A compositionally biased stretch (low complexity) spans 228 to 245 (TAAVAASSTATTTSDLAT). The segment at 263-302 (CHLCQGYLINATTIVECLHSFCHSCLINHLRKERFCPRCE) adopts an RING-type zinc-finger fold. Disordered stretches follow at residues 561–693 (KREK…FSED), 711–856 (VESP…NRTP), 895–960 (IGGG…SNNY), 1011–1097 (YKYT…EKQQ), 1116–1315 (SITI…LAPK), 1330–1408 (NPAA…HPVM), and 1512–1601 (AATG…TKSK). The segment covering 567–590 (SPQMSSKSSSKSSPCTPVSSPSEP) has biased composition (low complexity). The span at 611–637 (DPERREIVKPLKPEKESRSKKKDKDGS) shows a compositional bias: basic and acidic residues. Positions 638-649 (PKSSSSSSSSSS) are enriched in low complexity. 2 positions are modified to phosphoserine: S656 and S658. Polar residues predominate over residues 676-689 (SGVSTLSPRVTSGA). Positions 729 to 739 (SVQQSASPKSK) are enriched in low complexity. Positions 812-822 (LMPPPAKPPML) are enriched in pro residues. A compositionally biased stretch (polar residues) spans 929-938 (TTPSQGNKNV). Residues 1011–1022 (YKYTPKPTPNSG) are compositionally biased toward low complexity. Residues 1036-1045 (LGGGNGGSLG) are compositionally biased toward gly residues. Residues 1069–1085 (SSATQSGGNNGIVNNNI) are compositionally biased toward low complexity. The segment covering 1116 to 1133 (SITISRDNGDSSSPNNGQ) has biased composition (polar residues). S1139 carries the phosphoserine modification. The segment covering 1204–1217 (PQLPKVATPPPPSS) has biased composition (pro residues). Phosphothreonine is present on residues T1222, T1236, and T1251. A compositionally biased stretch (basic and acidic residues) spans 1247 to 1258 (VDKKTPSPEKRT). Residues S1253, S1266, and S1274 each carry the phosphoserine modification. Over residues 1261-1272 (QMGSHSPTASEN) the composition is skewed to polar residues. 2 stretches are compositionally biased toward polar residues: residues 1352 to 1375 (QSGQ…SPPA) and 1561 to 1587 (APQT…NNGA).

Component of PRC1 complex, which contains many PcG proteins like Pc, ph, Scm, Psc, Sce and also chromatin-remodeling proteins such as histone deacetylases. This complex is distinct from the Esc/E(z) complex, at least composed of esc, E(z), Su(z)12, HDAC1/Rpd3 and Caf1-55. The 2 complexes however cooperate and interact together during the first 3 hours of development to establish PcG silencing.

The protein localises to the nucleus. Functionally, polycomb group (PcG) protein. PcG proteins act by forming multiprotein complexes, which are required to maintain the transcriptionally repressive state of homeotic genes throughout development. PcG proteins are not required to initiate repression, but to maintain it during later stages of development. Component of the PcG multiprotein PRC1 complex, a complex that acts via chromatin remodeling and modification of histones; it mediates monoubiquitination of histone H2A 'Lys-118', rendering chromatin heritably changed in its expressibility. Needed to maintain expression patterns of the homeotic selector genes of the Antennapedia (Antp-C) and Bithorax (BX-C) complexes, and hence for the maintenance of segmental determination. This Drosophila melanogaster (Fruit fly) protein is Polycomb group protein Psc (Psc).